The chain runs to 365 residues: MSTSLWLNNLEEWMNEDYIRAIFENVRKVNYYEDGESGAILKTCCIEFESQDAARNALERQSTQRLISGNPISLDVVPEWQKPSYYMLFISNIDPEVSENDIKYLFQRYNFISARVLRCVDGTSTSIAFIWLANESDIQNAQVEMQGAFCLKRSILVHSVKSDKNTYLSSPGFYGTPQPLNQFTDPNNTAVYVHQLPENITTQELRSYFLHFGEILYTQVNNNSGRIVFAQRYFAEQAINEMNNFPLHGVRIQLSWARPPSMALLPSKQSTYWPALAAPVYPSMKDVPNNPFTPFSPINPYYAKSWNHTASAPLLPPGLKNGSDYPYLSVPPDILNDSYLAMCEAVNSRLDAESTMLLPVHYSQA.

RRM domains follow at residues 3 to 79, 86 to 162, and 189 to 259; these read TSLW…VVPE, YMLF…SVKS, and TAVY…WARP.

In terms of assembly, component of the U1 snRNP complex.

Its subcellular location is the nucleus. The chain is U1 snRNP-associated protein usp109 (usp109) from Schizosaccharomyces pombe (strain 972 / ATCC 24843) (Fission yeast).